Consider the following 398-residue polypeptide: GTP cyclohydrolase-2 (398 aa).

The interval 1-172 (MNTPTHTHPH…TAAAGASTTE (172 aa)) is unknown. The GTP cyclohydrolase II stretch occupies residues 173–398 (YELVTRTPVP…VKSIPKTGHA (226 aa)). GTP is bound at residue 220–224 (RVHSS). Cys225, Cys236, and Cys238 together coordinate Zn(2+). GTP is bound by residues Gln241, 263–265 (EGR), and Thr285. Asp297 functions as the Proton acceptor in the catalytic mechanism. Residue Arg299 is the Nucleophile of the active site. Residues Ser320 and Lys325 each contribute to the GTP site. The interval 375–398 (QRPQDPSETVDGETVKSIPKTGHA) is disordered.

In the C-terminal section; belongs to the GTP cyclohydrolase II family. It depends on Zn(2+) as a cofactor.

It carries out the reaction GTP + 4 H2O = 2,5-diamino-6-hydroxy-4-(5-phosphoribosylamino)-pyrimidine + formate + 2 phosphate + 3 H(+). Its pathway is cofactor biosynthesis; riboflavin biosynthesis; 5-amino-6-(D-ribitylamino)uracil from GTP: step 1/4. Its function is as follows. Catalyzes the conversion of GTP to 2,5-diamino-6-ribosylamino-4(3H)-pyrimidinone 5'-phosphate (DARP), formate and pyrophosphate. The protein is GTP cyclohydrolase-2 (ribA) of Xylella fastidiosa (strain 9a5c).